Reading from the N-terminus, the 277-residue chain is MEMO1 family protein Tpet_0837 (277 aa).

The protein belongs to the MEMO1 family.

The polypeptide is MEMO1 family protein Tpet_0837 (Thermotoga petrophila (strain ATCC BAA-488 / DSM 13995 / JCM 10881 / RKU-1)).